The primary structure comprises 553 residues: LIM domain-containing protein B (553 aa).

Residues 43 to 115 (LTYKDPNVST…SINNNISNNN (73 aa)) form a disordered region. The segment covering 99 to 114 (GPGLPNNSINNNISNN) has biased composition (low complexity). 5 consecutive LIM zinc-binding domains span residues 205 to 262 (PICG…ELFS), 263 to 322 (PRCF…RQKR), 328 to 387 (EICS…KQIL), 388 to 447 (NICG…FFGR), and 448 to 505 (QCFK…LPKE). The segment at 534–553 (ELKKERERAAKEKEKESKAK) is disordered.

It is found in the cytoplasm. The protein localises to the cell cortex. Its subcellular location is the cytoskeleton. Regulates and controls rearrangements of the actin cytoskeleton. Required for tip formation, morphogenesis, cell adhesion and motility, chemotaxis and aggregates formation. May function downstream of paxB. The sequence is that of LIM domain-containing protein B (limB) from Dictyostelium discoideum (Social amoeba).